A 1113-amino-acid chain; its full sequence is uncharacterized protein (1113 aa).

313–320 provides a ligand contact to ATP; sequence GPPGTGKS.

The protein belongs to the DNA2/NAM7 helicase family.

This is an uncharacterized protein from Mycoplasma pneumoniae (strain ATCC 29342 / M129 / Subtype 1) (Mycoplasmoides pneumoniae).